The chain runs to 1091 residues: MASVYIPVQNSEEEVRVVLDQLPRDASDILDILKAEQAPLDLWLIIAREYFKQGKIEQFRQILEEGSSSDIDEYYADVKYERIAILNALGAYYSYLGKTETKNREKEEQFISATRYYNKASRIDMHEPSTWVGKGQLLLAKGEIDNALQAFKIVLDTAPDNVPALLGQASVEFNRGRFSESLQLYKRALQVFPGCPAAVRLGIGLCRYKLGQLDKARQAFDRVLQLDPDNVEALVALGIMDLQANDSIGMRKGMDRMQQAFEIYPYCASALNYLANHFFFTGQHFLVEQLTETALAVTTHGPTKSHSFYNLARSYHSKGDFEKAGMYYMAAIKETNNNPHEFVFPYFGLGQVQLKLGELKGSVFNFEKVLEVYPDNCETLKALGHLYTQLGQNEKALEYMRKATKLDPRDAQAFVGLGELLISSDTGAALDAFKMARTLMKKGGQEVPIEVLNDIGALHFEREEFESALENFKEALGDGIWISFLDEKENLEQTGVSVLGYKDTGIFHRLIESGHSVDVPWNKVTTLFNLARLLEQIHKTEAATFMYRLILFKYPGYIDAYLRLAASAKAQNNLPLAIELVNEALKVDDKNPNALSLLGELELKNDDWVKAKETFRAANDATDGKDSYAILSLGNWNYFAAMRNEKRNPKLEATHLEKAKELYTKVLTQHNSNMYAANGSGIVLAEKGQFDIAKDVFTQVQEAASGSVFLQMPDVWVNLAHVYFAQGNFALTVKMYQNCLRKFFYNTDSQILLYLARTHYEAEQWQECKKTLLRAIHLTPSNYTFRFDLGAVMQKSSSSTLQKKKRTADEVRSTVAEAENAVRVFTQLSAASDLHVHGFDSKKIQTHVQYCSHLLEAAKVHREAAEQEELQNRQRLEVARQAALAEEARRKAEEQRKYQLEKRKQEEELRRLKQEEEKFQRIKEQWKSSTPGSNKRKDRVEDDDGESKPSERRRKKGGKRRKKDKSSRARHYEDDEEEAATMDDHNEVEDEDANTNYNREDEMTTQEAEEPVDDDAHDLLAAAGLEDPDVDDDEVPTSGVRRRRALSSSDEEGELMEESHPNSSPQKEKEESNGEAGDPNMEEEEEEEEAN.

Residue Ala2 is modified to N-acetylalanine. 16 TPR repeats span residues 90 to 127 (GAYY…DMHE), 128 to 161 (PSTW…APDN), 163 to 195 (PALL…FPGC), 197 to 230 (AAVR…DPDN), 232 to 267 (EALV…YPYC), 305 to 338 (SHSF…TNNN), 343 to 376 (VFPY…YPDN), 377 to 410 (CETL…DPRD), 412 to 443 (QAFV…MKKG), 449 to 482 (IEVL…GIWI), 558 to 591 (IDAY…DDKN), 593 to 625 (NALS…TDGK), 640 to 673 (AAMR…HNSN), 674 to 707 (MYAA…ASGS), 713 to 746 (PDVW…FFYN), and 749 to 782 (SQIL…TPSN). The tract at residues 919-1091 (FQRIKEQWKS…EEEEEEEEAN (173 aa)) is disordered. The span at 951-965 (ERRRKKGGKRRKKDK) shows a compositional bias: basic residues. 4 stretches are compositionally biased toward acidic residues: residues 974 to 993 (DDEE…DEDA), 1003 to 1016 (MTTQ…DDDA), 1026 to 1035 (EDPDVDDDEV), and 1080 to 1091 (NMEEEEEEEEAN).

In terms of assembly, component of the nuclear PAF1 complex (PAF1C), which consists of VIP2/ELF7/PAF1, VIP3/SKI8/WDR61, VIP4/LEO1, VIP5/RTF1, VIP6/ELF8/CTR9 and CDC73. Interacts with VIP3 and VIP4. As to expression, expressed in roots, leaves and shoot apex.

Its subcellular location is the nucleus. Its function is as follows. Component of the PAF1 complex (PAF1C) which is involved in histone modifications such as methylation on histone H3 'Lys-4' (H3K4me3). Involved in regulation of flowering time. Required for the expression of the MADS box genes and flowering repressors FLC, AGL27/FLM and AGL31/MAF2. Required for histone H3 trimethylation on 'Lys-4' H3K4me3 at the FLC and AGL27/FLM loci. Involved in the control of seed dormancy and germination. This is Protein CTR9 homolog from Arabidopsis thaliana (Mouse-ear cress).